Consider the following 122-residue polypeptide: Large ribosomal subunit protein uL14 (122 aa).

The protein belongs to the universal ribosomal protein uL14 family. As to quaternary structure, part of the 50S ribosomal subunit. Forms a cluster with proteins L3 and L19. In the 70S ribosome, L14 and L19 interact and together make contacts with the 16S rRNA in bridges B5 and B8.

Functionally, binds to 23S rRNA. Forms part of two intersubunit bridges in the 70S ribosome. The chain is Large ribosomal subunit protein uL14 from Mycoplasma pneumoniae (strain ATCC 29342 / M129 / Subtype 1) (Mycoplasmoides pneumoniae).